We begin with the raw amino-acid sequence, 172 residues long: NAD(P)H-quinone oxidoreductase subunit I, chloroplastic (172 aa).

4Fe-4S ferredoxin-type domains are found at residues 55–84 (GRIH…VDWK) and 95–124 (LNYS…MTEE). The [4Fe-4S] cluster site is built by cysteine 64, cysteine 67, cysteine 70, cysteine 74, cysteine 104, cysteine 107, cysteine 110, and cysteine 114.

Belongs to the complex I 23 kDa subunit family. In terms of assembly, NDH is composed of at least 16 different subunits, 5 of which are encoded in the nucleus. Requires [4Fe-4S] cluster as cofactor.

The protein localises to the plastid. It localises to the chloroplast thylakoid membrane. It catalyses the reaction a plastoquinone + NADH + (n+1) H(+)(in) = a plastoquinol + NAD(+) + n H(+)(out). It carries out the reaction a plastoquinone + NADPH + (n+1) H(+)(in) = a plastoquinol + NADP(+) + n H(+)(out). In terms of biological role, NDH shuttles electrons from NAD(P)H:plastoquinone, via FMN and iron-sulfur (Fe-S) centers, to quinones in the photosynthetic chain and possibly in a chloroplast respiratory chain. The immediate electron acceptor for the enzyme in this species is believed to be plastoquinone. Couples the redox reaction to proton translocation, and thus conserves the redox energy in a proton gradient. This chain is NAD(P)H-quinone oxidoreductase subunit I, chloroplastic, found in Capsella bursa-pastoris (Shepherd's purse).